Reading from the N-terminus, the 2364-residue chain is Cytotoxin-L (2364 aa).

The tract at residues 1-91 (MSLVNKAQLQ…EVLELKNNSL (91 aa)) is four-helical bundle. In terms of domain architecture, GT44 spans 96 to 468 (KNLHFIWIGG…APDVRSTINL (373 aa)). Positions 96–468 (KNLHFIWIGG…APDVRSTINL (373 aa)) are glucosyltransferase region. Residues 101–103 (IWI), asparagine 139, 265–270 (LAAASD), and 286–288 (DVD) contribute to the UDP-alpha-D-glucose site. Residues aspartate 288, glutamate 515, and serine 518 each contribute to the Mg(2+) site. 518 to 520 (SLW) is a binding site for UDP-alpha-D-glucose. Residues 544 to 799 (GEDDILDFSQ…KSKNLHELST (256 aa)) form an autoprocessing region region. Positions 545 and 546 each coordinate Zn(2+). In terms of domain architecture, Peptidase C80 spans 567–774 (SSSMRTPNKE…EESIIKDISS (208 aa)). 1D-myo-inositol hexakisphosphate is bound by residues tyrosine 577, lysine 600, and lysine 647. Histidine 653 contributes to the Zn(2+) binding site. Histidine 653 (for protease activity) is an active-site residue. The active-site Nucleophile; for protease activity is the cysteine 698. Histidine 757 contacts Zn(2+). 1D-myo-inositol hexakisphosphate is bound by residues lysine 764, lysine 775, and lysine 792. Residues 800 to 1500 (LLQEIKNNSN…ESIIRNIYMP (701 aa)) form a translocation region region. Interaction with host SEMA6A and SEMA6B regions lie at residues 1433–1438 (CIKLIE), 1466–1471 (DNETKY), 1484–1495 (FTAEFSNESIIR), 1504–1511 (NLFIYSSK), and 1596–1601 (YNNLDP). Cell wall-binding repeat units follow at residues 1833-1852 (VSGL…PKNN), 1854-1873 (ITGF…TKSG), 1876-1895 (SIGE…QGIL), 1926-1945 (FIGK…NYRA), 1946-1965 (AVEW…KTGE), 1967-1986 (LKGL…NGIM), 1987-2006 (QTGF…DGVM), 2007-2026 (QVGY…NGER), 2057-2076 (YNGI…SNTA), 2077-2097 (VVGW…NTAE), 2099-2118 (CIGL…NGIR), 2119-2138 (QLGF…SGKI), 2139-2158 (ELGY…SGLV), 2209-2224 (ETGW…YFDP), 2227-2249 (KKAY…NGIM), 2250-2269 (KTGL…DGKM), 2270-2289 (QFGY…DGKM), 2320-2339 (YTGW…EYIA), and 2340-2359 (ATSS…DTAE). The tract at residues 1835–2364 (GLIYINDSLY…PDTAELVVSE (530 aa)) is receptor-binding (CROPS) region.

It belongs to the clostridial glucosylating toxin (LCGT) family. In terms of assembly, homomultimer; forms an inactive homomultimer at pH 8, which dissociates at pH 4, leading to cytotoxicity. Interacts with host SEMA6A; interaction promotes toxin entry into host cell. Interacts with host SEMA6B; interaction promotes toxin entry into host cell. The cofactor is Zn(2+). Requires Mn(2+) as cofactor. It depends on Mg(2+) as a cofactor. Undergoes autocatalytic cleavage to release the N-terminal part (Glucosyltransferase TcsL), which constitutes the active part of the toxin, in the host cytosol. 1D-myo-inositol hexakisphosphate-binding (InsP6) activates the peptidase C80 domain and promotes autoprocessing.

It localises to the secreted. The protein resides in the host endosome membrane. Its subcellular location is the host cytoplasm. The protein localises to the host cytosol. It is found in the host cell membrane. The catalysed reaction is L-threonyl-[protein] + UDP-alpha-D-glucose = 3-O-(alpha-D-glucosyl)-L-threonyl-[protein] + UDP + H(+). Protease activity is activated upon binding to 1D-myo-inositol hexakisphosphate (InsP6), which induces conformational reorganization. In terms of biological role, precursor of a cytotoxin that targets the vascular endothelium, inducing an anti-inflammatory effect and resulting in lethal toxic shock syndrome. TcsL constitutes the main toxin that mediates the pathology of P.sordellii infection, an anaerobic Gram-positive bacterium found in soil and in the gastrointestinal and vaginal tracts of animals and humans; although the majority of carriers are asymptomatic, pathogenic P.sordellii infections arise rapidly and are highly lethal. This form constitutes the precursor of the toxin: it enters into host cells and mediates autoprocessing to release the active toxin (Glucosyltransferase TcsL) into the host cytosol. Targets vascular endothelium by binding to the semaphorin proteins SEMA6A and SEMA6B, and enters host cells via clathrin-mediated endocytosis. Once entered into host cells, acidification in the endosome promotes the membrane insertion of the translocation region and formation of a pore, leading to translocation of the GT44 and peptidase C80 domains across the endosomal membrane. This activates the peptidase C80 domain and autocatalytic processing, releasing the N-terminal part (Glucosyltransferase TcsL), which constitutes the active part of the toxin, in the cytosol. Active form of the toxin, which is released into the host cytosol following autoprocessing and inactivates small GTPases. Acts by mediating monoglucosylation of small GTPases of the Ras (H-Ras/HRAS, K-Ras/KRAS and N-Ras/NRAS) family in host cells at the conserved threonine residue located in the switch I region ('Thr-37/35'), using UDP-alpha-D-glucose as the sugar donor. Does not catalyze monoglucosylation of Ral/RALA. Also able to catalyze monoglucosylation of some members of the Rho family (Rac1 and Rap2A), but with less efficiency than with Ras proteins. Monoglucosylation of host small GTPases completely prevents the recognition of the downstream effector, blocking the GTPases in their inactive form and leading to apoptosis. Induces an anti-inflammatory effect, mainly by inactivating Ras proteins which results in blockage of the cell cycle and killing of immune cells. The absence or moderate local inflammatory response allows C.sordellii spreading in deep tissues, production of toxin which is released in the general circulation and causes a toxic shock syndrome. In Paraclostridium sordellii (Clostridium sordellii), this protein is Cytotoxin-L.